Here is a 397-residue protein sequence, read N- to C-terminus: Acetate kinase (397 aa).

Residue asparagine 7 coordinates Mg(2+). Lysine 14 serves as a coordination point for ATP. Substrate is bound at residue arginine 91. Aspartate 148 acts as the Proton donor/acceptor in catalysis. Residues 208-212 (HIGNG), 283-285 (DMR), and 331-335 (GVGEN) each bind ATP. Glutamate 384 contributes to the Mg(2+) binding site.

This sequence belongs to the acetokinase family. In terms of assembly, homodimer. Mg(2+) serves as cofactor. It depends on Mn(2+) as a cofactor.

It localises to the cytoplasm. The enzyme catalyses acetate + ATP = acetyl phosphate + ADP. It participates in metabolic intermediate biosynthesis; acetyl-CoA biosynthesis; acetyl-CoA from acetate: step 1/2. Functionally, catalyzes the formation of acetyl phosphate from acetate and ATP. Can also catalyze the reverse reaction. This Azobacteroides pseudotrichonymphae genomovar. CFP2 protein is Acetate kinase.